Consider the following 840-residue polypeptide: Phosphatidylinositol-glycan-specific phospholipase D (840 aa).

Positions 1–23 (MSAFRLWPGLLIMLGSLCHRGSP) are cleaved as a signal peptide. 5 N-linked (GlcNAc...) asparagine glycosylation sites follow: asparagine 94, asparagine 271, asparagine 292, asparagine 307, and asparagine 321. 7 FG-GAP repeats span residues 367-428 (SPLA…GLPP), 436-497 (EAHR…GGMS), 499-559 (SPNI…LSDK), 563-623 (NVEA…SLGR), 633-693 (QSWF…GATR), 704-770 (LLLS…TLGD), and 788-840 (QYVL…LGSD). N-linked (GlcNAc...) asparagine glycans are attached at residues asparagine 501, asparagine 568, asparagine 591, asparagine 604, and asparagine 659.

It belongs to the GPLD1 family. In terms of assembly, monomer.

Its subcellular location is the secreted. It catalyses the reaction a 6-(alpha-D-glucosaminyl)-1-(1,2-diacyl-sn-glycero-3-phospho)-1D-myo-inositol + H2O = 6-(alpha-D-glucosaminyl)-1D-myo-inositol + a 1,2-diacyl-sn-glycero-3-phosphate + H(+). Its function is as follows. This protein hydrolyzes the inositol phosphate linkage in proteins anchored by phosphatidylinositol glycans (GPI-anchor) thus releasing these proteins from the membrane. The protein is Phosphatidylinositol-glycan-specific phospholipase D (GPLD1) of Homo sapiens (Human).